The primary structure comprises 147 residues: Hemoglobin subunit beta-H1 (147 aa).

The region spanning 3–147 (HFTAEEKAAI…VANALSHKYH (145 aa)) is the Globin domain. Residues His-64 and His-93 each contribute to the heme b site.

Belongs to the globin family. Heterotetramer of two alpha chains and two beta chains. In terms of tissue distribution, red blood cells.

Functionally, this is an embryonic beta-type chain. The chain is Hemoglobin subunit beta-H1 (Hbb-bh1) from Mus musculus (Mouse).